A 158-amino-acid chain; its full sequence is 6,7-dimethyl-8-ribityllumazine synthase (158 aa).

5-amino-6-(D-ribitylamino)uracil is bound by residues Phe22, 57 to 59 (AVE), and 81 to 83 (AVI). 86–87 (GT) lines the (2S)-2-hydroxy-3-oxobutyl phosphate pocket. Catalysis depends on His89, which acts as the Proton donor. Phe114 is a 5-amino-6-(D-ribitylamino)uracil binding site. Arg128 serves as a coordination point for (2S)-2-hydroxy-3-oxobutyl phosphate.

This sequence belongs to the DMRL synthase family. As to quaternary structure, forms an icosahedral capsid composed of 60 subunits, arranged as a dodecamer of pentamers.

The enzyme catalyses (2S)-2-hydroxy-3-oxobutyl phosphate + 5-amino-6-(D-ribitylamino)uracil = 6,7-dimethyl-8-(1-D-ribityl)lumazine + phosphate + 2 H2O + H(+). It participates in cofactor biosynthesis; riboflavin biosynthesis; riboflavin from 2-hydroxy-3-oxobutyl phosphate and 5-amino-6-(D-ribitylamino)uracil: step 1/2. Its function is as follows. Catalyzes the formation of 6,7-dimethyl-8-ribityllumazine by condensation of 5-amino-6-(D-ribitylamino)uracil with 3,4-dihydroxy-2-butanone 4-phosphate. This is the penultimate step in the biosynthesis of riboflavin. This is 6,7-dimethyl-8-ribityllumazine synthase from Shewanella putrefaciens (strain CN-32 / ATCC BAA-453).